Here is a 462-residue protein sequence, read N- to C-terminus: tRNA modification GTPase MnmE (462 aa).

Arg-27, Glu-89, and Arg-128 together coordinate (6S)-5-formyl-5,6,7,8-tetrahydrofolate. The TrmE-type G domain occupies 224-383 (GLATAIVGRP…LDERIAKLFF (160 aa)). Asn-234 contributes to the K(+) binding site. GTP is bound by residues 234–239 (NVGKSS), 253–259 (TDVAGTT), and 278–281 (DTAG). Ser-238 provides a ligand contact to Mg(2+). K(+) contacts are provided by Thr-253, Val-255, and Thr-258. Residue Thr-259 coordinates Mg(2+). Lys-462 is a (6S)-5-formyl-5,6,7,8-tetrahydrofolate binding site.

This sequence belongs to the TRAFAC class TrmE-Era-EngA-EngB-Septin-like GTPase superfamily. TrmE GTPase family. Homodimer. Heterotetramer of two MnmE and two MnmG subunits. K(+) serves as cofactor.

The protein localises to the cytoplasm. Its function is as follows. Exhibits a very high intrinsic GTPase hydrolysis rate. Involved in the addition of a carboxymethylaminomethyl (cmnm) group at the wobble position (U34) of certain tRNAs, forming tRNA-cmnm(5)s(2)U34. The protein is tRNA modification GTPase MnmE of Lacticaseibacillus paracasei (strain ATCC 334 / BCRC 17002 / CCUG 31169 / CIP 107868 / KCTC 3260 / NRRL B-441) (Lactobacillus paracasei).